Here is a 323-residue protein sequence, read N- to C-terminus: tRNA U34 carboxymethyltransferase (323 aa).

Carboxy-S-adenosyl-L-methionine contacts are provided by residues Lys-91, Trp-105, Lys-110, Gly-130, 152–154 (DPS), 181–182 (IE), Met-196, Tyr-200, and Arg-315.

This sequence belongs to the class I-like SAM-binding methyltransferase superfamily. CmoB family. As to quaternary structure, homotetramer.

The enzyme catalyses carboxy-S-adenosyl-L-methionine + 5-hydroxyuridine(34) in tRNA = 5-carboxymethoxyuridine(34) in tRNA + S-adenosyl-L-homocysteine + H(+). Catalyzes carboxymethyl transfer from carboxy-S-adenosyl-L-methionine (Cx-SAM) to 5-hydroxyuridine (ho5U) to form 5-carboxymethoxyuridine (cmo5U) at position 34 in tRNAs. The chain is tRNA U34 carboxymethyltransferase from Vibrio cholerae serotype O1 (strain ATCC 39541 / Classical Ogawa 395 / O395).